The sequence spans 401 residues: S-adenosylmethionine synthase (401 aa).

137-142 (GEGSGD) lines the ATP pocket. A disordered region spans residues 272–305 (GTSAEQGDDGSVGRGNRSNGLITPNRSMSMEATS). A compositionally biased stretch (polar residues) spans 287–305 (NRSNGLITPNRSMSMEATS).

The protein belongs to the AdoMet synthase 2 family. Mg(2+) is required as a cofactor.

The catalysed reaction is L-methionine + ATP + H2O = S-adenosyl-L-methionine + phosphate + diphosphate. The protein operates within amino-acid biosynthesis; S-adenosyl-L-methionine biosynthesis; S-adenosyl-L-methionine from L-methionine: step 1/1. Catalyzes the formation of S-adenosylmethionine from methionine and ATP. This Natronomonas pharaonis (strain ATCC 35678 / DSM 2160 / CIP 103997 / JCM 8858 / NBRC 14720 / NCIMB 2260 / Gabara) (Halobacterium pharaonis) protein is S-adenosylmethionine synthase.